Reading from the N-terminus, the 88-residue chain is Small ribosomal subunit protein bS18 (88 aa).

The protein belongs to the bacterial ribosomal protein bS18 family. In terms of assembly, part of the 30S ribosomal subunit. Forms a tight heterodimer with protein bS6.

Binds as a heterodimer with protein bS6 to the central domain of the 16S rRNA, where it helps stabilize the platform of the 30S subunit. This Aliarcobacter butzleri (strain RM4018) (Arcobacter butzleri) protein is Small ribosomal subunit protein bS18.